The following is a 420-amino-acid chain: Probable glycosyltransferase YdaM (420 aa).

4 helical membrane passes run 4 to 24 (TLFFISLSLIWVMLLYHMFLM), 299 to 319 (IIFDLFYFFFTYFLFFFGVIM), 332 to 352 (LHLSVGFLAMILWILAFFLFM), and 371 to 391 (FFIVFLMYFTYSQAWIVLVIY).

Belongs to the glycosyltransferase 2 family.

It localises to the cell membrane. This chain is Probable glycosyltransferase YdaM (ydaM), found in Bacillus subtilis (strain 168).